The following is a 495-amino-acid chain: Glutamyl-tRNA(Gln) amidotransferase subunit A (495 aa).

Residues K75 and S150 each act as charge relay system in the active site. Residue S174 is the Acyl-ester intermediate of the active site.

This sequence belongs to the amidase family. GatA subfamily. In terms of assembly, heterotrimer of A, B and C subunits.

The catalysed reaction is L-glutamyl-tRNA(Gln) + L-glutamine + ATP + H2O = L-glutaminyl-tRNA(Gln) + L-glutamate + ADP + phosphate + H(+). In terms of biological role, allows the formation of correctly charged Gln-tRNA(Gln) through the transamidation of misacylated Glu-tRNA(Gln) in organisms which lack glutaminyl-tRNA synthetase. The reaction takes place in the presence of glutamine and ATP through an activated gamma-phospho-Glu-tRNA(Gln). This Paraburkholderia xenovorans (strain LB400) protein is Glutamyl-tRNA(Gln) amidotransferase subunit A.